Consider the following 371-residue polypeptide: tRNA-specific 2-thiouridylase MnmA (371 aa).

ATP-binding positions include 7–14 and Leu33; that span reads AMSGGVDS. Catalysis depends on Cys101, which acts as the Nucleophile. A disulfide bridge connects residues Cys101 and Cys213. Gly125 contributes to the ATP binding site. An interaction with tRNA region spans residues 163–165; sequence KDQ. The Cysteine persulfide intermediate role is filled by Cys213.

It belongs to the MnmA/TRMU family.

The protein resides in the cytoplasm. The enzyme catalyses S-sulfanyl-L-cysteinyl-[protein] + uridine(34) in tRNA + AH2 + ATP = 2-thiouridine(34) in tRNA + L-cysteinyl-[protein] + A + AMP + diphosphate + H(+). Catalyzes the 2-thiolation of uridine at the wobble position (U34) of tRNA, leading to the formation of s(2)U34. This Roseiflexus castenholzii (strain DSM 13941 / HLO8) protein is tRNA-specific 2-thiouridylase MnmA.